The chain runs to 490 residues: UDP-glycosyltransferase 73C7 (490 aa).

Residues Ser-291, 351–353 (APQ), 368–376 (HCGWNSTLE), and 390–393 (FAEQ) contribute to the UDP-alpha-D-glucose site.

It belongs to the UDP-glycosyltransferase family.

The polypeptide is UDP-glycosyltransferase 73C7 (UGT73C7) (Arabidopsis thaliana (Mouse-ear cress)).